The chain runs to 377 residues: UPF0425 pyridoxal phosphate-dependent protein MTH_1914 (377 aa).

Lys207 is modified (N6-(pyridoxal phosphate)lysine).

It belongs to the UPF0425 family. The cofactor is pyridoxal 5'-phosphate.

In Methanothermobacter thermautotrophicus (strain ATCC 29096 / DSM 1053 / JCM 10044 / NBRC 100330 / Delta H) (Methanobacterium thermoautotrophicum), this protein is UPF0425 pyridoxal phosphate-dependent protein MTH_1914.